Consider the following 281-residue polypeptide: Nucleoid occlusion protein (281 aa).

The tract at residues 1-26 (MKHPFSRLFSFGEKEQEEAGGKQERE) is disordered. Positions 12-26 (GEKEQEEAGGKQERE) are enriched in basic and acidic residues. The segment at residues 145-164 (EALAQRLGKGQSTIANKLRL) is a DNA-binding region (H-T-H motif).

The protein belongs to the ParB family.

The protein resides in the cytoplasm. Its subcellular location is the nucleoid. Its function is as follows. Effects nucleoid occlusion by binding relatively nonspecifically to DNA and preventing the assembly of the division machinery in the vicinity of the nucleoid, especially under conditions that disturb the cell cycle. It helps to coordinate cell division and chromosome segregation by preventing the formation of the Z ring through the nucleoid, which would cause chromosome breakage. This chain is Nucleoid occlusion protein, found in Geobacillus thermodenitrificans (strain NG80-2).